The primary structure comprises 109 residues: Large ribosomal subunit protein uL22 (109 aa).

The protein belongs to the universal ribosomal protein uL22 family. As to quaternary structure, part of the 50S ribosomal subunit.

Its function is as follows. This protein binds specifically to 23S rRNA; its binding is stimulated by other ribosomal proteins, e.g. L4, L17, and L20. It is important during the early stages of 50S assembly. It makes multiple contacts with different domains of the 23S rRNA in the assembled 50S subunit and ribosome. The globular domain of the protein is located near the polypeptide exit tunnel on the outside of the subunit, while an extended beta-hairpin is found that lines the wall of the exit tunnel in the center of the 70S ribosome. This Methylibium petroleiphilum (strain ATCC BAA-1232 / LMG 22953 / PM1) protein is Large ribosomal subunit protein uL22.